The following is a 131-amino-acid chain: Arsenate reductase 2 (131 aa).

Active-site nucleophile residues include Cys10, Cys82, and Cys89. Cystine bridges form between Cys10–Cys82 and Cys82–Cys89.

Belongs to the low molecular weight phosphotyrosine protein phosphatase family. Thioredoxin-coupled ArsC subfamily.

The protein localises to the cytoplasm. The catalysed reaction is arsenate + [thioredoxin]-dithiol + H(+) = arsenite + [thioredoxin]-disulfide + H2O. In terms of biological role, catalyzes the reduction of arsenate [As(V)] to arsenite [As(III)]. In Staphylococcus saprophyticus subsp. saprophyticus (strain ATCC 15305 / DSM 20229 / NCIMB 8711 / NCTC 7292 / S-41), this protein is Arsenate reductase 2.